A 208-amino-acid chain; its full sequence is FMN-dependent NADH:quinone oxidoreductase (208 aa).

FMN is bound by residues 17-19, 99-102, and 143-146; these read SNS, MWNL, and SRGG.

Belongs to the azoreductase type 1 family. Homodimer. It depends on FMN as a cofactor.

The enzyme catalyses 2 a quinone + NADH + H(+) = 2 a 1,4-benzosemiquinone + NAD(+). The catalysed reaction is N,N-dimethyl-1,4-phenylenediamine + anthranilate + 2 NAD(+) = 2-(4-dimethylaminophenyl)diazenylbenzoate + 2 NADH + 2 H(+). Its function is as follows. Quinone reductase that provides resistance to thiol-specific stress caused by electrophilic quinones. Functionally, also exhibits azoreductase activity. Catalyzes the reductive cleavage of the azo bond in aromatic azo compounds to the corresponding amines. The protein is FMN-dependent NADH:quinone oxidoreductase of Staphylococcus aureus (strain bovine RF122 / ET3-1).